Reading from the N-terminus, the 1136-residue chain is DNA-directed RNA polymerase I subunit RPA2 (1136 aa).

The interval Met-1 to Tyr-24 is disordered. RNA is bound at residue Arg-180. The segment at Val-194 to Tyr-208 is loop B. The tract at residues Leu-236 to Leu-247 is loop A. Asp-367 serves as a coordination point for RNA. Fork loop regions lie at residues Leu-439–Leu-453 and Arg-474–Leu-489. RNA is bound at residue Lys-890. Residues Arg-1020 and Arg-1036 each coordinate DNA. Ser-1051 carries the post-translational modification Phosphoserine. Cys-1071, Cys-1074, Cys-1099, and Cys-1102 together coordinate Zn(2+). The segment at Cys-1071–Cys-1102 adopts a C4-type zinc-finger fold.

It belongs to the RNA polymerase beta chain family. As to quaternary structure, component of the RNA polymerase I (Pol I) complex consisting of 13 subunits: a ten-subunit catalytic core composed of POLR1A/RPA1, POLR1B/RPA2, POLR1C/RPAC1, POLR1D/RPAC2, POLR1H/RPA12, POLR2E/RPABC1, POLR2F/RPABC2, POLR2H/RPABC3, POLR2K/RPABC4 and POLR2L/RPABC5; a mobile stalk subunit POLR1F/RPA43 protruding from the core and additional subunits homologous to general transcription factors POLR1E/RPA49 and POLR1G/RPA34. Part of Pol I pre-initiation complex (PIC), in which Pol I core assembles with RRN3 and promoter-bound UTBF and SL1/TIF-IB complex.

It is found in the nucleus. The protein localises to the nucleolus. The protein resides in the chromosome. The catalysed reaction is RNA(n) + a ribonucleoside 5'-triphosphate = RNA(n+1) + diphosphate. Its function is as follows. Catalytic core component of RNA polymerase I (Pol I), a DNA-dependent RNA polymerase which synthesizes ribosomal RNA precursors using the four ribonucleoside triphosphates as substrates. Transcribes 47S pre-rRNAs from multicopy rRNA gene clusters, giving rise to 5.8S, 18S and 28S ribosomal RNAs. Pol I-mediated transcription cycle proceeds through transcription initiation, transcription elongation and transcription termination stages. During transcription initiation, Pol I pre-initiation complex (PIC) is recruited by the selectivity factor 1 (SL1/TIF-IB) complex bound to the core promoter that precedes an rDNA repeat unit. The PIC assembly bends the promoter favoring the formation of the transcription bubble and promoter escape. Once the polymerase has escaped from the promoter it enters the elongation phase during which RNA is actively polymerized, based on complementarity with the template DNA strand. Highly processive, assembles in structures referred to as 'Miller trees' where many elongating Pol I complexes queue and transcribe the same rDNA coding regions. At terminator sequences downstream of the rDNA gene, PTRF interacts with Pol I and halts Pol I transcription leading to the release of the RNA transcript and polymerase from the DNA. Forms Pol I active center together with the largest subunit POLR1A/RPA1. Appends one nucleotide at a time to the 3' end of the nascent RNA, with POLR1A/RPA1 contributing a Mg(2+)-coordinating DxDGD motif, and POLR1B/RPA2 providing lysine residues believed to facilitate Watson-Crick base pairing between the incoming nucleotide and the template base. Typically, Mg(2+) ions direct a 5' nucleoside triphosphate to form a phosphodiester bond with the 3' hydroxyl of the preceding nucleotide of the nascent RNA, with the elimination of pyrophosphate. Has proofreading activity: Pauses and backtracks to allow the cleavage of a missincorporated nucleotide via POLR1H/RPA12. High Pol I processivity is associated with decreased transcription fidelity. The polypeptide is DNA-directed RNA polymerase I subunit RPA2 (POLR1B) (Pongo abelii (Sumatran orangutan)).